The following is a 209-amino-acid chain: Kynurenine formamidase (209 aa).

Position 20 (Trp20) interacts with substrate. Zn(2+) is bound by residues His50, His54, and Asp56. Residue His60 is the Proton donor/acceptor of the active site. His161 and Glu173 together coordinate Zn(2+).

It belongs to the Cyclase 1 superfamily. KynB family. In terms of assembly, homodimer. The cofactor is Zn(2+).

The catalysed reaction is N-formyl-L-kynurenine + H2O = L-kynurenine + formate + H(+). It participates in amino-acid degradation; L-tryptophan degradation via kynurenine pathway; L-kynurenine from L-tryptophan: step 2/2. Its function is as follows. Catalyzes the hydrolysis of N-formyl-L-kynurenine to L-kynurenine, the second step in the kynurenine pathway of tryptophan degradation. The sequence is that of Kynurenine formamidase from Bacillus cereus (strain ATCC 14579 / DSM 31 / CCUG 7414 / JCM 2152 / NBRC 15305 / NCIMB 9373 / NCTC 2599 / NRRL B-3711).